The following is a 150-amino-acid chain: Small ribosomal subunit protein uS9 (150 aa).

It belongs to the universal ribosomal protein uS9 family.

This Mycolicibacterium smegmatis (strain ATCC 700084 / mc(2)155) (Mycobacterium smegmatis) protein is Small ribosomal subunit protein uS9.